A 637-amino-acid polypeptide reads, in one-letter code: 5-hmdU DNA kinase (637 aa).

The disordered stretch occupies residues 249–269; that stretch reads AEKGVKRGKKGRKTSPVAKTL.

Belongs to the thymidylate kinase family. 5-hmdU DNA kinase subfamily.

The enzyme catalyses 5-hydroxymethyl-dUMP in DNA + ATP = 5-phosphomethyl-dUMP in DNA + ADP + H(+). Functionally, phosphorylates 5-hydroxymethyluracil (5hmdU) into 5-phosphomethyl-2'-deoxyuridine (5- PmdU) on DNA as a step in the pathway leading to thymidine hypermodifications in the viral genome. The phosphate is added internally to the DNA polymer. As a final result of the pathway of hypermodification, alpha-glutamylthymidine (YdTMP) substitutes for about 20% of the thymidines in the viral DNA, the 80% left are dTMP. These modifications probably prevent degradation of viral genome by the host restriction-modification antiviral defense system. This chain is 5-hmdU DNA kinase, found in Bacillus phage SP10 (Bacillus phage SP-10).